The sequence spans 114 residues: Pole-localizer protein TmaR (114 aa).

The stretch at 70–111 (RDDYESRVDDYTIRNAELSKQRREASTKMKEQKKAHAELLKN) forms a coiled coil. The disordered stretch occupies residues 89 to 114 (KQRREASTKMKEQKKAHAELLKNAEK).

Belongs to the pole-localizer TmaR family.

The protein localises to the cytoplasm. Its function is as follows. Pole-localizer protein involved in the regulation of several cellular processes. In Haemophilus influenzae (strain 86-028NP), this protein is Pole-localizer protein TmaR.